Consider the following 566-residue polypeptide: Arginine--tRNA ligase (566 aa).

The 'HIGH' region signature appears at 121-131 (ANPNGPFHIGH).

The protein belongs to the class-I aminoacyl-tRNA synthetase family.

The protein resides in the cytoplasm. The catalysed reaction is tRNA(Arg) + L-arginine + ATP = L-arginyl-tRNA(Arg) + AMP + diphosphate. This is Arginine--tRNA ligase from Methanococcus maripaludis (strain C6 / ATCC BAA-1332).